A 201-amino-acid chain; its full sequence is Small ribosomal subunit protein uS4 (201 aa).

Residues Ser91 to Ala157 form the S4 RNA-binding domain.

This sequence belongs to the universal ribosomal protein uS4 family. As to quaternary structure, part of the 30S ribosomal subunit. Contacts protein S5. The interaction surface between S4 and S5 is involved in control of translational fidelity.

One of the primary rRNA binding proteins, it binds directly to 16S rRNA where it nucleates assembly of the body of the 30S subunit. Its function is as follows. With S5 and S12 plays an important role in translational accuracy. The protein is Small ribosomal subunit protein uS4 of Mycolicibacterium paratuberculosis (strain ATCC BAA-968 / K-10) (Mycobacterium paratuberculosis).